The primary structure comprises 360 residues: A-type ATP synthase subunit C (360 aa).

The interval Met1–Thr23 is disordered. Residues Gly9 to Gly22 are compositionally biased toward basic residues.

Belongs to the V-ATPase V0D/AC39 subunit family. In terms of assembly, has multiple subunits with at least A(3), B(3), C, D, E, F, H, I and proteolipid K(x).

Its subcellular location is the cell membrane. In terms of biological role, component of the A-type ATP synthase that produces ATP from ADP in the presence of a proton gradient across the membrane. The chain is A-type ATP synthase subunit C from Methanosarcina acetivorans (strain ATCC 35395 / DSM 2834 / JCM 12185 / C2A).